Reading from the N-terminus, the 464-residue chain is Cell division protein FtsA (464 aa).

The tract at residues 392–464 (EVIESDKDSE…FKKLMKSLFE (73 aa)) is disordered. Positions 416–455 (KKENDEVAPEAPREESYEDRENHLEDEQQTEGKAKEESKF) are enriched in basic and acidic residues.

Belongs to the FtsA/MreB family. In terms of assembly, self-interacts. Interacts with FtsZ.

Its subcellular location is the cell membrane. Its function is as follows. Cell division protein that is involved in the assembly of the Z ring. May serve as a membrane anchor for the Z ring. In Staphylococcus epidermidis (strain ATCC 35984 / DSM 28319 / BCRC 17069 / CCUG 31568 / BM 3577 / RP62A), this protein is Cell division protein FtsA.